The primary structure comprises 184 residues: MSDIIQDTKARMSKSIDNLSRELANISAGRANSNLLSGVTVDYYGAPTPVQQLASINVPEARLLVISPYDKSSVADIEKAIYAANLGVNPTSDGEVIRITVPALTEERRKELVKNVKKIGEDAKVSIRNIRRDINDQLKKDEKNGDITEDDLRSQTEDVQKATDNSIKEIDQLVEDKEKDIMSV.

The tract at residues 141-164 is disordered; sequence DEKNGDITEDDLRSQTEDVQKATD.

This sequence belongs to the RRF family.

It is found in the cytoplasm. Its function is as follows. Responsible for the release of ribosomes from messenger RNA at the termination of protein biosynthesis. May increase the efficiency of translation by recycling ribosomes from one round of translation to another. The polypeptide is Ribosome-recycling factor (Staphylococcus haemolyticus (strain JCSC1435)).